We begin with the raw amino-acid sequence, 189 residues long: Protein GrpE (189 aa).

The interval 1-31 is disordered; it reads MSKKHMKGNGGEVPENSEMSGSEELVAVEPG.

It belongs to the GrpE family. As to quaternary structure, homodimer.

It is found in the cytoplasm. Functionally, participates actively in the response to hyperosmotic and heat shock by preventing the aggregation of stress-denatured proteins, in association with DnaK and GrpE. It is the nucleotide exchange factor for DnaK and may function as a thermosensor. Unfolded proteins bind initially to DnaJ; upon interaction with the DnaJ-bound protein, DnaK hydrolyzes its bound ATP, resulting in the formation of a stable complex. GrpE releases ADP from DnaK; ATP binding to DnaK triggers the release of the substrate protein, thus completing the reaction cycle. Several rounds of ATP-dependent interactions between DnaJ, DnaK and GrpE are required for fully efficient folding. This Syntrophobacter fumaroxidans (strain DSM 10017 / MPOB) protein is Protein GrpE.